We begin with the raw amino-acid sequence, 639 residues long: Chaperone protein DnaK (639 aa).

The residue at position 198 (T198) is a Phosphothreonine; by autocatalysis. The segment at 604–639 (KSQAQGGDNADAGKQANAAADDVVDAEFEEVKDDKK) is disordered. The segment covering 606 to 624 (QAQGGDNADAGKQANAAAD) has biased composition (low complexity). Acidic residues predominate over residues 625–639 (DVVDAEFEEVKDDKK).

The protein belongs to the heat shock protein 70 family.

Its function is as follows. Acts as a chaperone. In Shewanella baltica (strain OS223), this protein is Chaperone protein DnaK.